Here is a 262-residue protein sequence, read N- to C-terminus: Pyridoxine 5'-phosphate synthase (262 aa).

Asn6 is a 3-amino-2-oxopropyl phosphate binding site. 8–9 (DH) contributes to the 1-deoxy-D-xylulose 5-phosphate binding site. Arg17 is a binding site for 3-amino-2-oxopropyl phosphate. His43 (proton acceptor) is an active-site residue. 2 residues coordinate 1-deoxy-D-xylulose 5-phosphate: Arg45 and His50. Residue Glu70 is the Proton acceptor of the active site. Thr102 contributes to the 1-deoxy-D-xylulose 5-phosphate binding site. The active-site Proton donor is the His215. 3-amino-2-oxopropyl phosphate contacts are provided by residues Gly216 and 237–238 (GH).

Belongs to the PNP synthase family. As to quaternary structure, homooctamer; tetramer of dimers.

It localises to the cytoplasm. The catalysed reaction is 3-amino-2-oxopropyl phosphate + 1-deoxy-D-xylulose 5-phosphate = pyridoxine 5'-phosphate + phosphate + 2 H2O + H(+). The protein operates within cofactor biosynthesis; pyridoxine 5'-phosphate biosynthesis; pyridoxine 5'-phosphate from D-erythrose 4-phosphate: step 5/5. Its function is as follows. Catalyzes the complicated ring closure reaction between the two acyclic compounds 1-deoxy-D-xylulose-5-phosphate (DXP) and 3-amino-2-oxopropyl phosphate (1-amino-acetone-3-phosphate or AAP) to form pyridoxine 5'-phosphate (PNP) and inorganic phosphate. The chain is Pyridoxine 5'-phosphate synthase from Helicobacter pylori (strain Shi470).